A 189-amino-acid polypeptide reads, in one-letter code: ATP synthase subunit b (189 aa).

The chain crosses the membrane as a helical span at residues 35-54; sequence LLAQMFNFLVLLILLRAVAY.

It belongs to the ATPase B chain family. In terms of assembly, F-type ATPases have 2 components, F(1) - the catalytic core - and F(0) - the membrane proton channel. F(1) has five subunits: alpha(3), beta(3), gamma(1), delta(1), epsilon(1). F(0) has three main subunits: a(1), b(2) and c(10-14). The alpha and beta chains form an alternating ring which encloses part of the gamma chain. F(1) is attached to F(0) by a central stalk formed by the gamma and epsilon chains, while a peripheral stalk is formed by the delta and b chains.

The protein localises to the cell membrane. Its function is as follows. F(1)F(0) ATP synthase produces ATP from ADP in the presence of a proton or sodium gradient. F-type ATPases consist of two structural domains, F(1) containing the extramembraneous catalytic core and F(0) containing the membrane proton channel, linked together by a central stalk and a peripheral stalk. During catalysis, ATP synthesis in the catalytic domain of F(1) is coupled via a rotary mechanism of the central stalk subunits to proton translocation. Functionally, component of the F(0) channel, it forms part of the peripheral stalk, linking F(1) to F(0). This is ATP synthase subunit b from Desulforamulus reducens (strain ATCC BAA-1160 / DSM 100696 / MI-1) (Desulfotomaculum reducens).